Here is a 114-residue protein sequence, read N- to C-terminus: Hydrogenase maturation factor HypA (114 aa).

Residue H2 coordinates Ni(2+). C70, C73, C86, and C89 together coordinate Zn(2+).

It belongs to the HypA/HybF family.

Its function is as follows. Involved in the maturation of [NiFe] hydrogenases. Required for nickel insertion into the metal center of the hydrogenase. This Trichodesmium erythraeum (strain IMS101) protein is Hydrogenase maturation factor HypA.